We begin with the raw amino-acid sequence, 496 residues long: Probable cytosol aminopeptidase (496 aa).

Positions 252 and 257 each coordinate Mn(2+). The active site involves lysine 264. Mn(2+) contacts are provided by aspartate 275, aspartate 334, and glutamate 336. Arginine 338 is a catalytic residue.

Belongs to the peptidase M17 family. Mn(2+) serves as cofactor.

The protein resides in the cytoplasm. It catalyses the reaction Release of an N-terminal amino acid, Xaa-|-Yaa-, in which Xaa is preferably Leu, but may be other amino acids including Pro although not Arg or Lys, and Yaa may be Pro. Amino acid amides and methyl esters are also readily hydrolyzed, but rates on arylamides are exceedingly low.. The enzyme catalyses Release of an N-terminal amino acid, preferentially leucine, but not glutamic or aspartic acids.. In terms of biological role, presumably involved in the processing and regular turnover of intracellular proteins. Catalyzes the removal of unsubstituted N-terminal amino acids from various peptides. This Leifsonia xyli subsp. xyli (strain CTCB07) protein is Probable cytosol aminopeptidase.